The chain runs to 270 residues: NAD kinase (270 aa).

Asp-49 functions as the Proton acceptor in the catalytic mechanism. Residues 49 to 50 (DG), Arg-54, 126 to 127 (NE), Arg-152, Asp-154, 165 to 170 (TAYNKS), Ala-189, and Gln-227 contribute to the NAD(+) site.

It belongs to the NAD kinase family. Requires a divalent metal cation as cofactor.

Its subcellular location is the cytoplasm. The enzyme catalyses NAD(+) + ATP = ADP + NADP(+) + H(+). In terms of biological role, involved in the regulation of the intracellular balance of NAD and NADP, and is a key enzyme in the biosynthesis of NADP. Catalyzes specifically the phosphorylation on 2'-hydroxyl of the adenosine moiety of NAD to yield NADP. This is NAD kinase from Lactococcus lactis subsp. cremoris (strain MG1363).